A 283-amino-acid polypeptide reads, in one-letter code: RNase adapter protein RapZ (283 aa).

G8–S15 lines the ATP pocket. D56 to N59 contacts GTP. Positions R266–K283 are RNA-binding.

This sequence belongs to the RapZ-like family. RapZ subfamily. In terms of assembly, homotrimer.

Modulates the synthesis of GlmS, by affecting the processing and stability of the regulatory small RNA GlmZ. When glucosamine-6-phosphate (GlcN6P) concentrations are high in the cell, RapZ binds GlmZ and targets it to cleavage by RNase E. Consequently, GlmZ is inactivated and unable to activate GlmS synthesis. Under low GlcN6P concentrations, RapZ is sequestered and inactivated by an other regulatory small RNA, GlmY, preventing GlmZ degradation and leading to synthesis of GlmS. The polypeptide is RNase adapter protein RapZ (Photorhabdus laumondii subsp. laumondii (strain DSM 15139 / CIP 105565 / TT01) (Photorhabdus luminescens subsp. laumondii)).